The sequence spans 161 residues: Putative acetyltransferase SAV0762 (161 aa).

Belongs to the transferase hexapeptide repeat family.

This Staphylococcus aureus (strain Mu50 / ATCC 700699) protein is Putative acetyltransferase SAV0762.